Consider the following 132-residue polypeptide: Agouti-signaling protein (132 aa).

The N-terminal stretch at 1-22 is a signal peptide; sequence MDVTRLLLATLLVFLCFFTANS. An N-linked (GlcNAc...) asparagine glycan is attached at N39. The interval 61-87 is disordered; that stretch reads QIGRKEAEKKRSSKKEASMKKVARPRT. The segment covering 63–79 has biased composition (basic and acidic residues); that stretch reads GRKEAEKKRSSKKEASM. 5 cysteine pairs are disulfide-bonded: C93–C108, C100–C114, C107–C125, C111–C132, and C116–C123. One can recognise an Agouti domain in the interval 93–132; sequence CVATRNSCKPPAPACCDPCASCQCRFFRSACSCRVLSLNC.

Its subcellular location is the secreted. In terms of biological role, involved in the regulation of melanogenesis. The binding of ASP to MC1R precludes alpha-MSH initiated signaling and thus blocks production of cAMP, leading to a down-regulation of eumelanogenesis (brown/black pigment) and thus increasing synthesis of pheomelanin (yellow/red pigment). The polypeptide is Agouti-signaling protein (ASIP) (Gorilla gorilla gorilla (Western lowland gorilla)).